Reading from the N-terminus, the 109-residue chain is uncharacterized protein (109 aa).

A signal peptide spans 1-19; it reads MKKFALLAGLFVFAPMTWA.

This is an uncharacterized protein from Escherichia coli O6:H1 (strain CFT073 / ATCC 700928 / UPEC).